A 486-amino-acid polypeptide reads, in one-letter code: MDIFYDLIKWLVVLIYWLLIANITYRILIKRRSIPSSMSWLLTIYIIPFIGIAIWFFFGELYLGKRQKKIAKKIWSISNTYLNKLKSYKYIFQIKNSEVATSLFQLCKHRQGIYGIKNNKITLLTNTQNTIEVLIRDIYSARNNIEMVFYIWKPGGIADDVAMALIDSAKRGVHCRLMLDSAGSVEFFRSPWFDIMKKSGIEIVEALKVSLIRIFLRRLDVRQHRKIILIDNYISYSGSMNLVDPYLFKQSSGVGQWIDLMTRIEGPVATAIGIIYSCDWEIETGFKILPKLPNKEMLKKKCNQNSSIQVIASGPGFPKNVIHQALLTAIYSARNELIMTTPYLVPSDDLLHAICTAAQRGVKVSIIIPLYHDSILVKWASRVFFSELLEAGVKIYQFKKGLLHSKSILIDQQLSLIGTVNLDMRSLWLNFEITLVIDDRKFSHHLSAIQKEYIDNSRLLDKNTWSMRAYWTRILEKIFYFLSPLL.

2 consecutive transmembrane segments (helical) span residues 3-23 (IFYD…IANI) and 38-58 (MSWL…WFFF). PLD phosphodiesterase domains follow at residues 219-246 (LDVR…VDPY) and 399-426 (KKGL…DMRS). Catalysis depends on residues His224, Lys226, Asp231, His404, Lys406, and Asp411.

It belongs to the phospholipase D family. Cardiolipin synthase subfamily. ClsA sub-subfamily.

Its subcellular location is the cell inner membrane. It carries out the reaction 2 a 1,2-diacyl-sn-glycero-3-phospho-(1'-sn-glycerol) = a cardiolipin + glycerol. Its function is as follows. Catalyzes the reversible phosphatidyl group transfer from one phosphatidylglycerol molecule to another to form cardiolipin (CL) (diphosphatidylglycerol) and glycerol. In Buchnera aphidicola subsp. Schizaphis graminum (strain Sg), this protein is Cardiolipin synthase A.